Here is a 361-residue protein sequence, read N- to C-terminus: Methionine import ATP-binding protein MetN (361 aa).

Residues 22–257 (VRLIDVKRRF…PQTDITRSLL (236 aa)) form the ABC transporter domain. Position 54-61 (54-61 (GRSGAGKS)) interacts with ATP.

It belongs to the ABC transporter superfamily. Methionine importer (TC 3.A.1.24) family. In terms of assembly, the complex is composed of two ATP-binding proteins (MetN), two transmembrane proteins (MetI) and a solute-binding protein (MetQ).

It localises to the cell inner membrane. The enzyme catalyses L-methionine(out) + ATP + H2O = L-methionine(in) + ADP + phosphate + H(+). It catalyses the reaction D-methionine(out) + ATP + H2O = D-methionine(in) + ADP + phosphate + H(+). In terms of biological role, part of the ABC transporter complex MetNIQ involved in methionine import. Responsible for energy coupling to the transport system. The polypeptide is Methionine import ATP-binding protein MetN (Rhizobium etli (strain ATCC 51251 / DSM 11541 / JCM 21823 / NBRC 15573 / CFN 42)).